We begin with the raw amino-acid sequence, 203 residues long: GTP-binding protein ypt1 (203 aa).

GTP is bound by residues 15–23 (GDSGVGKSC), 33–40 (YTESYIST), 63–67 (DTAGQ), 121–124 (NKSD), and 151–153 (SAK). Residues 37–45 (YISTIGVDF) carry the Effector region motif. The disordered stretch occupies residues 180 to 203 (NNTKASVNVSPGHGVSNNSSGGCC). Residues cysteine 202 and cysteine 203 are each lipidated (S-geranylgeranyl cysteine).

This sequence belongs to the small GTPase superfamily. Rab family.

It localises to the endoplasmic reticulum membrane. It is found in the golgi apparatus membrane. The protein localises to the cytoplasm. The protein resides in the preautophagosomal structure membrane. With respect to regulation, rab activation is generally mediated by a guanine exchange factor (GEF), while inactivation through hydrolysis of bound GTP is catalyzed by a GTPase activating protein (GAP). The small GTPases Rab are key regulators of intracellular membrane trafficking, from the formation of transport vesicles to their fusion with membranes. Rabs cycle between an inactive GDP-bound form and an active GTP-bound form that is able to recruit to membranes different set of downstream effectors directly responsible for vesicle formation, movement, tethering and fusion. Ypt-1 regulates the trafficking of secretory vesicles from the endoplasmic reticulum (ER) to the Golgi. Plays a role in the initial events of the autophagic vacuole development which take place at specialized regions of the endoplasmic reticulum. Also involved in the recycling of membrane proteins. This chain is GTP-binding protein ypt1 (ypt-1), found in Neurospora crassa (strain ATCC 24698 / 74-OR23-1A / CBS 708.71 / DSM 1257 / FGSC 987).